A 480-amino-acid polypeptide reads, in one-letter code: Radical SAM Nalpha-GlyT isomerase (480 aa).

Positions 125, 129, and 132 each coordinate iron-sulfur cluster. Residues 457-480 (KIVEPTPPEEDGGERKIIPITQID) are disordered.

It catalyses the reaction 5-N(alpha)-glycyl-dTMP in DNA + AH2 + S-adenosyl-L-methionine = 5-C(alpha)-glycyl-dTMP in DNA + 5'-deoxyadenosine + L-methionine + A + H(+). Functionally, isomerizes 5-N-alpha-glycinylthymidine (Nalpha-GlyT) into 5-Calpha-glycinylthymidine (Calpha-GlyT) as a step in the pathway leading to thymidine hypermodifications in the viral genome. As a final result of the pathway of hypermodification, 5-aminoethyl-2'-deoxyuridine (5-NedU) substitutes for about 30% of thymidines in the viral DNA. These modifications probably prevent degradation of viral genome by the host restriction-modification antiviral defense system. The polypeptide is Radical SAM Nalpha-GlyT isomerase (Pseudomonas phage M6).